A 1382-amino-acid chain; its full sequence is MKASAVLAPGILALLFTLVQGNDGECQEALAKSEMNVNMKYQLPNFTAETPIQNVVLHEHHIYLGATNYIYVLNDKDLQKVSEYKTGPVLEHPECFPCQNCSNNANLSSGIWKDNINMALLVDRYYDDQLISCGSVNRGACQRHILPPDNPADIQSKVHCMFSPQADEEPSQCPDCVVSALGAKVLLSEKDRFINFFVGNTINSSYFPDHPLHSISVRRLKETQDGFKFLTDQSYIDVLPEFRDSYPIKYVHAFESNHFIYFLTVQKETLDAQTFHTRIIRFCSVDSGLHSYMEMPLECILTEKRRKRSTREEVFNILQAAYVSKPGAQLAKQIGASLNDDILFGVFAQSKPDSAEPMNRSAVCAFPIKYVNEFFNKIVNKNNVRCLQHFYGPHHEHCFNRTLLRNSSGCEVRRDEYRTEFTTAFQRVDLFMGQFNQVLLTSISTFIKGDLTIANLGTSEGRFMQVVVSRSGSSTPHVNFQLDSHPVSPEVIVEHPLNQNGYTLVVTGKKITKIPLNGLGCGHFQSCSQCLFAPSFVQCGWCHDKCVRSEECPSGIWTQEICLPAIHKVFPTSAPLEGGTMLTICGWDFGFRRNNKFDLKKTRVLLGNESCTLTLSESTTNMLKCTVGPAMNEHFNMSIIISHGRGTAQYSTFSYVDPVITSISPSYGPKAGGTLLTLTGKYLNSGNSRHISIGGKTCTLKSVSNSILECYTPAQIISTEFPVKLKIDLANRETSSFSYREDPIVHEIHPTKSFVSGGSTITGVGKNLNSVSVPRMVINVQEAGRNFTVACQHRSNSEIICCTTPSLQQLNLRLPLKTKAFFMLDGILSKYFDLIYVHNPVFKPFEKPVMISMGNENVLEIKGNDIDPEAVKGEVLKVGNKSCENIHSHSEAVLCTVPNDLLKLNSELNIEWKQAVSSTVLGKVIVQPDQNFTGLIVGVVSISIILLLLLGLFLWMKKRKQIKDLGSELVRYDARVHTPHLDRLVSARSVSPTTEMVSNESVDYRATFPEDQFPNSSQNGSCRQVQYPLTDLSPILTSGDSDISSPLLQNTVHIDLSALNPELVQAVQHVVIGPSSLIVHFNEVIGRGHFGCVYHGTLLDNDGKKIHCAVKSLNRITDIGEVSQFLTEGIIMKDFSHPNVLSLLGICLRSEGSPLVVLPYMKHGDLRNFIRNETHNPTVKDLIGFGLQVAKGMKYLASKKFVHRDLAARNCMLDEKFTVKVADFGLARDMYDKEYYSVHNKTGAKLPVKWMALESLQTQKFTTKSDVWSFGVLLWELMTRGAPPYPDVNTFDITVYLLQGRRLLQPEYCPDPLYEVMLKCWHPKAEMRPSFSELVSRISAIFSTFIGEHYVHVNATYVNVKCVAPYPSLLSSQDNVNGEVDT.

The signal sequence occupies residues Met1 to Gly24. The Extracellular portion of the chain corresponds to Glu25 to Thr933. Residues Gln27–Leu516 form the Sema domain. N-linked (GlcNAc...) asparagine glycans are attached at residues Asn45, Asn100, and Asn106. Disulfide bonds link Cys95–Cys101, Cys98–Cys160, Cys133–Cys141, and Cys173–Cys176. N-linked (GlcNAc...) asparagine glycans are attached at residues Asn203 and Asn359. Intrachain disulfides connect Cys299–Cys364 and Cys386–Cys398. Residues Asn400 and Asn406 are each glycosylated (N-linked (GlcNAc...) asparagine). Disulfide bonds link Cys521/Cys539, Cys527/Cys562, Cys530/Cys546, and Cys542/Cys552. 3 consecutive IPT/TIG domains span residues Pro564–Val656, Pro658–Arg740, and Pro743–Val837. Thr583 carries O-linked (Man) threonine glycosylation. N-linked (GlcNAc...) asparagine glycosylation is found at Asn608 and Asn636. Residues Thr677 and Thr762 are each glycosylated (O-linked (Man) threonine). N-linked (GlcNAc...) asparagine glycans are attached at residues Asn786, Asn880, and Asn931. The chain crosses the membrane as a helical span at residues Gly934–Met956. The Cytoplasmic portion of the chain corresponds to Lys957–Thr1382. At Ser967 the chain carries Phosphoserine. Position 978 is a phosphothreonine (Thr978). Phosphoserine occurs at positions 991, 998, and 1001. Position 1004 is a phosphotyrosine (Tyr1004). The region spanning Val1079–Ile1346 is the Protein kinase domain. Residues Ile1085 to Val1093 and Lys1111 contribute to the ATP site. The Proton acceptor role is filled by Asp1205. The interval Leu1213–Thr1382 is interaction with RANBP9. The residue at position 1231 (Tyr1231) is a Phosphotyrosine. Phosphotyrosine; by autocatalysis occurs at positions 1235 and 1236. Thr1290 carries the phosphothreonine modification. An interaction with MUC20 region spans residues Trp1321 to Val1360. Phosphotyrosine; by autocatalysis occurs at positions 1350 and 1357. Residue Tyr1366 is modified to Phosphotyrosine.

This sequence belongs to the protein kinase superfamily. Tyr protein kinase family. In terms of assembly, heterodimer made of an alpha chain (50 kDa) and a beta chain (145 kDa) which are disulfide linked. Binds PLXNB1. Interacts when phosphorylated with downstream effectors including STAT3, PIK3R1, SRC, PCLG1, GRB2 and GAB1. Interacts with SPSB1, SPSB2 and SPSB4. Interacts with INPP5D/SHIP1. When phosphorylated at Tyr-1357, interacts with INPPL1/SHIP2. Interacts with RANBP9 and RANBP10, as well as SPSB1, SPSB2, SPSB3 and SPSB4. SPSB1 binding occurs in the presence and in the absence of HGF, however HGF treatment has a positive effect on this interaction. Interacts with MUC20; prevents interaction with GRB2 and suppresses hepatocyte growth factor-induced cell proliferation. Interacts with GRB10. Interacts with PTPN1 and PTPN2. Interacts with HSP90AA1 and HSP90AB1; the interaction suppresses MET kinase activity. Interacts with tensin TNS3. Interacts (when phosphorylated) with tensin TNS4 (via SH2 domain); the interaction increases MET protein stability by inhibiting MET endocytosis and subsequent lysosomal degradation. Post-translationally, autophosphorylated in response to ligand binding on Tyr-1235 and Tyr-1236 in the kinase domain leading to further phosphorylation of Tyr-1350 and Tyr-1357 in the C-terminal multifunctional docking site. Dephosphorylated by PTPRJ at Tyr-1350 and Tyr-1366. Dephosphorylated by PTPN1 and PTPN2. Ubiquitinated. Ubiquitination by CBL regulates the receptor stability and activity through proteasomal degradation. In terms of processing, O-mannosylation of IPT/TIG domains by TMEM260 is required for protein maturation. O-mannosylated residues are composed of single mannose glycans that are not elongated or modified.

It is found in the membrane. The enzyme catalyses L-tyrosyl-[protein] + ATP = O-phospho-L-tyrosyl-[protein] + ADP + H(+). In its inactive state, the C-terminal tail interacts with the catalytic domain and inhibits the kinase activity. Upon ligand binding, the C-terminal tail is displaced and becomes phosphorylated, thus increasing the kinase activity. Receptor tyrosine kinase that transduces signals from the extracellular matrix into the cytoplasm by binding to hepatocyte growth factor/HGF ligand. Regulates many physiological processes including proliferation, scattering, morphogenesis and survival. Ligand binding at the cell surface induces autophosphorylation of MET on its intracellular domain that provides docking sites for downstream signaling molecules. Following activation by ligand, interacts with the PI3-kinase subunit PIK3R1, PLCG1, SRC, GRB2, STAT3 or the adapter GAB1. Recruitment of these downstream effectors by MET leads to the activation of several signaling cascades including the RAS-ERK, PI3 kinase-AKT, or PLCgamma-PKC. The RAS-ERK activation is associated with the morphogenetic effects while PI3K/AKT coordinates prosurvival effects. During embryonic development, MET signaling plays a role in gastrulation, development and migration of muscles and neuronal precursors, angiogenesis and kidney formation. In adults, participates in wound healing as well as organ regeneration and tissue remodeling. Also promotes differentiation and proliferation of hematopoietic cells. The chain is Hepatocyte growth factor receptor (MET) from Eulemur macaco macaco (Black lemur).